Consider the following 636-residue polypeptide: Molybdenum cofactor biosynthesis protein 1 (636 aa).

Residues 1–383 form a molybdenum cofactor biosynthesis protein A region; sequence MAARPLSRML…QMKNRPMILI (383 aa). At Ser64 the chain carries Phosphoserine. The region spanning 64–277 is the Radical SAM core domain; it reads SFGRQHSYLR…LDTVRQQWPE (214 aa). GTP is bound at residue Arg73. 2 residues coordinate [4Fe-4S] cluster: Cys80 and Cys84. Tyr86 is an S-adenosyl-L-methionine binding site. Residue Cys87 coordinates [4Fe-4S] cluster. Arg123 is a binding site for GTP. Gly127 contacts S-adenosyl-L-methionine. Thr154 lines the GTP pocket. Ser178 is an S-adenosyl-L-methionine binding site. N6-acetyllysine is present on Lys198. Lys215 serves as a coordination point for GTP. Position 249 (Met249) interacts with S-adenosyl-L-methionine. [4Fe-4S] cluster contacts are provided by Cys312 and Cys315. 317 to 319 serves as a coordination point for GTP; sequence RLR. Cys329 lines the [4Fe-4S] cluster pocket. The molybdenum cofactor biosynthesis protein C stretch occupies residues 414-636; the sequence is MSFSSQVATL…GGQRGDFHRA (223 aa). The interval 456–480 is disordered; sequence DANSKCLSPGSWASAAPSGPQLTSE. Residues 463–475 are compositionally biased toward low complexity; sequence SPGSWASAAPSGP. Position 528 is an N6-acetyllysine (Lys528). The For molybdenum cofactor biosynthesis protein C activity role is filled by Asp606.

In the C-terminal section; belongs to the MoaC family. This sequence in the N-terminal section; belongs to the radical SAM superfamily. MoaA family. Isoform MOCS1A and isoform MOCS1B probably form a heterooligomer. Requires [4Fe-4S] cluster as cofactor. Isoform MOCS1A and isoform 2 are widely expressed.

The catalysed reaction is GTP + AH2 + S-adenosyl-L-methionine = (8S)-3',8-cyclo-7,8-dihydroguanosine 5'-triphosphate + 5'-deoxyadenosine + L-methionine + A + H(+). It carries out the reaction (8S)-3',8-cyclo-7,8-dihydroguanosine 5'-triphosphate = cyclic pyranopterin phosphate + diphosphate. It participates in cofactor biosynthesis; molybdopterin biosynthesis. Its function is as follows. Isoform MOCS1A and isoform MOCS1B probably form a complex that catalyzes the conversion of 5'-GTP to cyclic pyranopterin monophosphate (cPMP). MOCS1A catalyzes the cyclization of GTP to (8S)-3',8-cyclo-7,8-dihydroguanosine 5'-triphosphate and MOCS1B catalyzes the subsequent conversion of (8S)-3',8-cyclo-7,8-dihydroguanosine 5'-triphosphate to cPMP. In Homo sapiens (Human), this protein is Molybdenum cofactor biosynthesis protein 1 (MOCS1).